A 310-amino-acid chain; its full sequence is Carbamate kinase 1 (310 aa).

As to quaternary structure, homodimer (predominantly) and homotetramer.

The protein localises to the cytoplasm. It carries out the reaction hydrogencarbonate + NH4(+) + ATP = carbamoyl phosphate + ADP + H2O + H(+). Its pathway is metabolic intermediate metabolism; carbamoyl phosphate degradation; CO(2) and NH(3) from carbamoyl phosphate: step 1/1. With respect to regulation, inhibited by adenosine(5')pentaphospho(5')adenosine (Ap5A), Ap6A and to a much lower extent by Ap4A. Catalyzes the reversible synthesis of carbamate and ATP from carbamoyl phosphate and ADP. Can also catalyze, although with low efficiency, the phosphorylation of bicarbonate, leading to the formation of carboxyphosphate, an unstable intermediate found in the reactions catalyzed by carbamoyl-phosphate synthase and biotin carboxylase. Can also use acetate. This chain is Carbamate kinase 1 (arcC1), found in Enterococcus faecium (Streptococcus faecium).